Reading from the N-terminus, the 428-residue chain is Probable RNase MJ4 (428 aa).

Zn(2+)-binding residues include H57, H59, D61, H62, H143, D165, and H397.

The protein belongs to the metallo-beta-lactamase superfamily. RNA-metabolizing metallo-beta-lactamase-like family. Requires Zn(2+) as cofactor.

Its function is as follows. Probably an RNase. The sequence is that of Probable RNase MJ4 from Methanocaldococcus jannaschii (strain ATCC 43067 / DSM 2661 / JAL-1 / JCM 10045 / NBRC 100440) (Methanococcus jannaschii).